Consider the following 225-residue polypeptide: Uridine kinase (225 aa).

12–19 lines the ATP pocket; sequence GGTGAGKT.

This sequence belongs to the uridine kinase family.

The protein resides in the cytoplasm. It carries out the reaction uridine + ATP = UMP + ADP + H(+). The enzyme catalyses cytidine + ATP = CMP + ADP + H(+). It participates in pyrimidine metabolism; CTP biosynthesis via salvage pathway; CTP from cytidine: step 1/3. Its pathway is pyrimidine metabolism; UMP biosynthesis via salvage pathway; UMP from uridine: step 1/1. The polypeptide is Uridine kinase (Halobacterium salinarum (strain ATCC 700922 / JCM 11081 / NRC-1) (Halobacterium halobium)).